We begin with the raw amino-acid sequence, 85 residues long: Large ribosomal subunit protein bL27 (85 aa).

The tract at residues 1–22 is disordered; that stretch reads MAHKKAGGSTRNGRDSESKRLG.

It belongs to the bacterial ribosomal protein bL27 family.

The chain is Large ribosomal subunit protein bL27 from Vibrio parahaemolyticus serotype O3:K6 (strain RIMD 2210633).